Reading from the N-terminus, the 258-residue chain is Caffeoyl-CoA O-methyltransferase 1 (258 aa).

Residues 1–16 (MATTATEAAPAQEQQA) show a composition bias toward low complexity. The tract at residues 1-31 (MATTATEAAPAQEQQANGNGEQKTRHSEVGH) is disordered. Positions 22 to 31 (QKTRHSEVGH) are enriched in basic and acidic residues. K32 is a binding site for substrate. S-adenosyl-L-methionine contacts are provided by residues T74, E96, 98 to 99 (GV), S104, D122, and A151. D174 provides a ligand contact to substrate. D174 is a binding site for a divalent metal cation. An S-adenosyl-L-methionine-binding site is contributed by D176. Residues D200 and N201 each contribute to the a divalent metal cation site. Residue N205 participates in substrate binding.

The protein belongs to the class I-like SAM-binding methyltransferase superfamily. Cation-dependent O-methyltransferase family. CCoAMT subfamily. Requires a divalent metal cation as cofactor.

It carries out the reaction (E)-caffeoyl-CoA + S-adenosyl-L-methionine = (E)-feruloyl-CoA + S-adenosyl-L-homocysteine + H(+). The protein operates within aromatic compound metabolism; phenylpropanoid biosynthesis. Methylates caffeoyl-CoA to feruloyl-CoA and 5-hydroxyferuloyl-CoA to sinapoyl-CoA. Plays a role in the synthesis of feruloylated polysaccharides. Involved in the reinforcement of the plant cell wall. Also involved in the responding to wounding or pathogen challenge by the increased formation of cell wall-bound ferulic acid polymers. This chain is Caffeoyl-CoA O-methyltransferase 1 (CCOAOMT1), found in Zea mays (Maize).